The sequence spans 481 residues: N-succinylglutamate 5-semialdehyde dehydrogenase (481 aa).

Position 206–211 (206–211 (GSARTG)) interacts with NAD(+). Residues E229 and C263 contribute to the active site.

Belongs to the aldehyde dehydrogenase family. AstD subfamily.

The catalysed reaction is N-succinyl-L-glutamate 5-semialdehyde + NAD(+) + H2O = N-succinyl-L-glutamate + NADH + 2 H(+). It functions in the pathway amino-acid degradation; L-arginine degradation via AST pathway; L-glutamate and succinate from L-arginine: step 4/5. Functionally, catalyzes the NAD-dependent reduction of succinylglutamate semialdehyde into succinylglutamate. The polypeptide is N-succinylglutamate 5-semialdehyde dehydrogenase (Sphingopyxis alaskensis (strain DSM 13593 / LMG 18877 / RB2256) (Sphingomonas alaskensis)).